Here is a 506-residue protein sequence, read N- to C-terminus: Bifunctional purine biosynthesis protein PurH (506 aa).

An MGS-like domain is found at 1–146; sequence MARLALLSVS…KNFAHLTVLC (146 aa).

It belongs to the PurH family.

It carries out the reaction (6R)-10-formyltetrahydrofolate + 5-amino-1-(5-phospho-beta-D-ribosyl)imidazole-4-carboxamide = 5-formamido-1-(5-phospho-D-ribosyl)imidazole-4-carboxamide + (6S)-5,6,7,8-tetrahydrofolate. The enzyme catalyses IMP + H2O = 5-formamido-1-(5-phospho-D-ribosyl)imidazole-4-carboxamide. The protein operates within purine metabolism; IMP biosynthesis via de novo pathway; 5-formamido-1-(5-phospho-D-ribosyl)imidazole-4-carboxamide from 5-amino-1-(5-phospho-D-ribosyl)imidazole-4-carboxamide (10-formyl THF route): step 1/1. It participates in purine metabolism; IMP biosynthesis via de novo pathway; IMP from 5-formamido-1-(5-phospho-D-ribosyl)imidazole-4-carboxamide: step 1/1. The polypeptide is Bifunctional purine biosynthesis protein PurH (Nostoc sp. (strain PCC 7120 / SAG 25.82 / UTEX 2576)).